The sequence spans 209 residues: Uracil phosphoribosyltransferase (209 aa).

5-phospho-alpha-D-ribose 1-diphosphate contacts are provided by residues Arg-79, Arg-104, and Asp-131–Ser-139. Uracil contacts are provided by residues Ile-194 and Gly-199–Ala-201. A 5-phospho-alpha-D-ribose 1-diphosphate-binding site is contributed by Asp-200.

This sequence belongs to the UPRTase family. Requires Mg(2+) as cofactor.

It carries out the reaction UMP + diphosphate = 5-phospho-alpha-D-ribose 1-diphosphate + uracil. Its pathway is pyrimidine metabolism; UMP biosynthesis via salvage pathway; UMP from uracil: step 1/1. Its activity is regulated as follows. Allosterically activated by GTP. In terms of biological role, catalyzes the conversion of uracil and 5-phospho-alpha-D-ribose 1-diphosphate (PRPP) to UMP and diphosphate. In Latilactobacillus sakei (Lactobacillus sakei), this protein is Uracil phosphoribosyltransferase.